Consider the following 225-residue polypeptide: Uridylate kinase (225 aa).

Residue 9–10 (GS) coordinates ATP. Gly-46 contributes to the UMP binding site. The ATP site is built by Gly-47 and Arg-51. UMP-binding positions include Asp-67 and 115–121 (THPAHTT). ATP contacts are provided by Thr-141, Asn-142, Tyr-147, and Asp-150.

This sequence belongs to the UMP kinase family. As to quaternary structure, homohexamer.

It is found in the cytoplasm. The catalysed reaction is UMP + ATP = UDP + ADP. It functions in the pathway pyrimidine metabolism; CTP biosynthesis via de novo pathway; UDP from UMP (UMPK route): step 1/1. Its activity is regulated as follows. Inhibited by UTP. Functionally, catalyzes the reversible phosphorylation of UMP to UDP. This is Uridylate kinase from Methanococcus maripaludis (strain C7 / ATCC BAA-1331).